Consider the following 335-residue polypeptide: Cut9-interacting protein scn1 (335 aa).

This sequence belongs to the metallo-dependent hydrolases superfamily.

In terms of biological role, interacts with cut9. The polypeptide is Cut9-interacting protein scn1 (scn1) (Schizosaccharomyces pombe (strain 972 / ATCC 24843) (Fission yeast)).